Here is a 123-residue protein sequence, read N- to C-terminus: UPF0102 protein PSHAa2523 (123 aa).

It belongs to the UPF0102 family.

This chain is UPF0102 protein PSHAa2523, found in Pseudoalteromonas translucida (strain TAC 125).